We begin with the raw amino-acid sequence, 1411 residues long: Protein ECM5 (1411 aa).

The 42-residue stretch at 118 to 159 folds into the JmjN domain; the sequence is IPTFILAKKELPDPIKFYELVEDLGSVYGCVKLKIIPDADKF. The ARID domain occupies 185-279; sequence RTKIVDFYAK…ILLDFDIYEE (95 aa). The segment at 285 to 312 is disordered; that stretch reads RNNEKNEDMVESEIFRHSNSRSRDEEEP. The 220-residue stretch at 476-695 folds into the JmjC domain; sequence KNILDQWNLD…FSSEAAKWTS (220 aa). The PHD-type zinc finger occupies 1238 to 1290; it reads TKYCFCRRVEEGTAMVECEICKEWYHVDCISNGELVPPDDPNVLFVCSICTPP.

Its subcellular location is the nucleus. In terms of biological role, may be involved in cell wall organization and biogenesis. The sequence is that of Protein ECM5 (ECM5) from Saccharomyces cerevisiae (strain ATCC 204508 / S288c) (Baker's yeast).